The chain runs to 328 residues: Formimidoylglutamase (328 aa).

Residues His-133, Asp-159, His-161, Asp-163, Asp-253, and Asp-255 each coordinate Mn(2+).

It belongs to the arginase family. Mn(2+) serves as cofactor.

It catalyses the reaction N-formimidoyl-L-glutamate + H2O = formamide + L-glutamate. It participates in amino-acid degradation; L-histidine degradation into L-glutamate; L-glutamate from N-formimidoyl-L-glutamate (hydrolase route): step 1/1. Functionally, catalyzes the conversion of N-formimidoyl-L-glutamate to L-glutamate and formamide. This chain is Formimidoylglutamase, found in Streptococcus pyogenes serotype M1.